The chain runs to 495 residues: Glutamyl-tRNA(Gln) amidotransferase subunit A (495 aa).

Residues Lys-78 and Ser-158 each act as charge relay system in the active site. The active-site Acyl-ester intermediate is Ser-182.

This sequence belongs to the amidase family. GatA subfamily. Heterotrimer of A, B and C subunits.

The enzyme catalyses L-glutamyl-tRNA(Gln) + L-glutamine + ATP + H2O = L-glutaminyl-tRNA(Gln) + L-glutamate + ADP + phosphate + H(+). Allows the formation of correctly charged Gln-tRNA(Gln) through the transamidation of misacylated Glu-tRNA(Gln) in organisms which lack glutaminyl-tRNA synthetase. The reaction takes place in the presence of glutamine and ATP through an activated gamma-phospho-Glu-tRNA(Gln). The chain is Glutamyl-tRNA(Gln) amidotransferase subunit A from Roseobacter denitrificans (strain ATCC 33942 / OCh 114) (Erythrobacter sp. (strain OCh 114)).